An 81-amino-acid polypeptide reads, in one-letter code: Large ribosomal subunit protein bL31B (81 aa).

This sequence belongs to the bacterial ribosomal protein bL31 family. Type B subfamily. Part of the 50S ribosomal subunit.

The protein is Large ribosomal subunit protein bL31B of Oceanobacillus iheyensis (strain DSM 14371 / CIP 107618 / JCM 11309 / KCTC 3954 / HTE831).